A 393-amino-acid chain; its full sequence is S-adenosylmethionine synthase (393 aa).

Position 16 (His-16) interacts with ATP. Asp-18 contacts Mg(2+). Glu-44 contacts K(+). L-methionine is bound by residues Glu-57 and Gln-100. The flexible loop stretch occupies residues 100 to 110 (QSNDIAQGVDH). ATP contacts are provided by residues 167-169 (DAK), 238-239 (RF), Asp-247, 253-254 (RK), Ala-270, and Lys-274. L-methionine is bound at residue Asp-247. L-methionine is bound at residue Lys-278.

This sequence belongs to the AdoMet synthase family. As to quaternary structure, homotetramer; dimer of dimers. Requires Mg(2+) as cofactor. K(+) is required as a cofactor.

It localises to the cytoplasm. It catalyses the reaction L-methionine + ATP + H2O = S-adenosyl-L-methionine + phosphate + diphosphate. Its pathway is amino-acid biosynthesis; S-adenosyl-L-methionine biosynthesis; S-adenosyl-L-methionine from L-methionine: step 1/1. In terms of biological role, catalyzes the formation of S-adenosylmethionine (AdoMet) from methionine and ATP. The overall synthetic reaction is composed of two sequential steps, AdoMet formation and the subsequent tripolyphosphate hydrolysis which occurs prior to release of AdoMet from the enzyme. This is S-adenosylmethionine synthase from Variovorax paradoxus (strain S110).